We begin with the raw amino-acid sequence, 214 residues long: ATP phosphoribosyltransferase (214 aa).

This sequence belongs to the ATP phosphoribosyltransferase family. Short subfamily. In terms of assembly, heteromultimer composed of HisG and HisZ subunits.

The protein resides in the cytoplasm. It carries out the reaction 1-(5-phospho-beta-D-ribosyl)-ATP + diphosphate = 5-phospho-alpha-D-ribose 1-diphosphate + ATP. It participates in amino-acid biosynthesis; L-histidine biosynthesis; L-histidine from 5-phospho-alpha-D-ribose 1-diphosphate: step 1/9. In terms of biological role, catalyzes the condensation of ATP and 5-phosphoribose 1-diphosphate to form N'-(5'-phosphoribosyl)-ATP (PR-ATP). Has a crucial role in the pathway because the rate of histidine biosynthesis seems to be controlled primarily by regulation of HisG enzymatic activity. This Streptococcus gordonii (strain Challis / ATCC 35105 / BCRC 15272 / CH1 / DL1 / V288) protein is ATP phosphoribosyltransferase.